Reading from the N-terminus, the 295-residue chain is Glycine N-acyltransferase-like protein Keg1 (295 aa).

An N6-acetyllysine; alternate modification is found at lysine 41. Lysine 41 bears the N6-succinyllysine; alternate mark. An N6-acetyllysine modification is found at lysine 43. Position 48 is an N6-acetyllysine; alternate (lysine 48). Residue lysine 48 is modified to N6-succinyllysine; alternate. An N6-acetyllysine mark is found at lysine 80 and lysine 83. N6-acetyllysine; alternate occurs at positions 124, 128, and 140. N6-succinyllysine; alternate is present on residues lysine 124, lysine 128, and lysine 140. The residue at position 150 (lysine 150) is an N6-acetyllysine. Lysine 255 carries the post-translational modification N6-acetyllysine; alternate. Position 255 is an N6-succinyllysine; alternate (lysine 255).

It belongs to the glycine N-acyltransferase family. In terms of assembly, binds to microtubules. Specifically expressed in kidney and liver. Up-regulated in the regenerating liver as well as in hepatocellular carcinoma.

The protein localises to the cytoplasm. Its subcellular location is the cytoskeleton. The protein resides in the microtubule organizing center. It localises to the centrosome. The enzyme catalyses an acyl-CoA + glycine = an N-acylglycine + CoA + H(+). Acyltransferase which transfers the acyl group to the N-terminus of glycine. Can conjugate a multitude of substrates to form a variety of N-acylglycines. The protein is Glycine N-acyltransferase-like protein Keg1 (Keg1) of Rattus norvegicus (Rat).